The primary structure comprises 267 residues: Small ribosomal subunit protein mS23 (267 aa).

Positions 230–267 (VKTASKDGKSSNGSMGAEDVVEKTTSAWETEFVEEESS) are disordered.

This sequence belongs to the mitochondrion-specific ribosomal protein mS23 family. As to quaternary structure, component of the mitochondrial small ribosomal subunit.

It is found in the mitochondrion. The chain is Small ribosomal subunit protein mS23 (RSM25) from Meyerozyma guilliermondii (strain ATCC 6260 / CBS 566 / DSM 6381 / JCM 1539 / NBRC 10279 / NRRL Y-324) (Yeast).